Here is a 79-residue protein sequence, read N- to C-terminus: UPF0154 protein llmg_1186 (79 aa).

The helical transmembrane segment at 4–24 threads the bilayer; sequence ILAILLMVVCLLAGFFLGTWF.

This sequence belongs to the UPF0154 family.

The protein resides in the cell membrane. In Lactococcus lactis subsp. cremoris (strain MG1363), this protein is UPF0154 protein llmg_1186.